Here is a 364-residue protein sequence, read N- to C-terminus: Dihydroorotate dehydrogenase (quinone) (364 aa).

FMN contacts are provided by residues 61–65 (AGYDK) and T85. K65 contributes to the substrate binding site. 110–114 (NRLGF) is a substrate binding site. The FMN site is built by N139 and N170. Residue N170 participates in substrate binding. Residue S173 is the Nucleophile of the active site. N175 is a substrate binding site. 2 residues coordinate FMN: K215 and S243. Substrate is bound at residue 244 to 245 (NT). FMN-binding positions include G266, G295, and 316–317 (YT).

This sequence belongs to the dihydroorotate dehydrogenase family. Type 2 subfamily. In terms of assembly, monomer. The cofactor is FMN.

It is found in the cell membrane. The catalysed reaction is (S)-dihydroorotate + a quinone = orotate + a quinol. It participates in pyrimidine metabolism; UMP biosynthesis via de novo pathway; orotate from (S)-dihydroorotate (quinone route): step 1/1. Its function is as follows. Catalyzes the conversion of dihydroorotate to orotate with quinone as electron acceptor. The sequence is that of Dihydroorotate dehydrogenase (quinone) from Brucella anthropi (strain ATCC 49188 / DSM 6882 / CCUG 24695 / JCM 21032 / LMG 3331 / NBRC 15819 / NCTC 12168 / Alc 37) (Ochrobactrum anthropi).